An 88-amino-acid chain; its full sequence is Eclosion hormone (88 aa).

Positions 1–26 (MANKLTAVIVVALAVAFMVNLDYANC) are cleaved as a signal peptide. 3 disulfide bridges follow: cysteine 40-cysteine 64, cysteine 44-cysteine 60, and cysteine 47-cysteine 75.

This sequence belongs to the insect eclosion hormone family.

The protein localises to the secreted. Its function is as follows. Neuropeptide that triggers the performance of ecdysis behaviors at the end of a molt. It triggers adult behavior patterns: larval, pupal and adult ecdysis, and plasticization during the molt. The protein is Eclosion hormone of Bombyx mori (Silk moth).